Here is a 242-residue protein sequence, read N- to C-terminus: ATP-dependent dethiobiotin synthetase BioD (242 aa).

12 to 17 contacts ATP; the sequence is EVGKTV. Thr16 is a Mg(2+) binding site. Lys37 is a catalytic residue. Ser41 contributes to the substrate binding site. ATP is bound by residues Asp51 and 112–115; that span reads EGAG. Mg(2+) contacts are provided by Asp51 and Glu112.

This sequence belongs to the dethiobiotin synthetase family. As to quaternary structure, homodimer. Mg(2+) serves as cofactor.

The protein resides in the cytoplasm. It catalyses the reaction (7R,8S)-7,8-diammoniononanoate + CO2 + ATP = (4R,5S)-dethiobiotin + ADP + phosphate + 3 H(+). Its pathway is cofactor biosynthesis; biotin biosynthesis; biotin from 7,8-diaminononanoate: step 1/2. In terms of biological role, catalyzes a mechanistically unusual reaction, the ATP-dependent insertion of CO2 between the N7 and N8 nitrogen atoms of 7,8-diaminopelargonic acid (DAPA, also called 7,8-diammoniononanoate) to form a ureido ring. This is ATP-dependent dethiobiotin synthetase BioD from Bacillus cereus (strain AH820).